Consider the following 493-residue polypeptide: Glutamyl-tRNA(Gln) amidotransferase subunit A (493 aa).

Residues lysine 79 and serine 159 each act as charge relay system in the active site. The active-site Acyl-ester intermediate is the serine 183.

Belongs to the amidase family. GatA subfamily. Heterotrimer of A, B and C subunits.

The catalysed reaction is L-glutamyl-tRNA(Gln) + L-glutamine + ATP + H2O = L-glutaminyl-tRNA(Gln) + L-glutamate + ADP + phosphate + H(+). In terms of biological role, allows the formation of correctly charged Gln-tRNA(Gln) through the transamidation of misacylated Glu-tRNA(Gln) in organisms which lack glutaminyl-tRNA synthetase. The reaction takes place in the presence of glutamine and ATP through an activated gamma-phospho-Glu-tRNA(Gln). The sequence is that of Glutamyl-tRNA(Gln) amidotransferase subunit A from Brucella anthropi (strain ATCC 49188 / DSM 6882 / CCUG 24695 / JCM 21032 / LMG 3331 / NBRC 15819 / NCTC 12168 / Alc 37) (Ochrobactrum anthropi).